The chain runs to 360 residues: DNA primase large subunit PriL (360 aa).

4 residues coordinate [4Fe-4S] cluster: Cys-237, Cys-309, Cys-318, and Cys-325. The tract at residues 340-360 (DDGDDDDLADWRDREDDDSPD) is disordered.

The protein belongs to the eukaryotic-type primase large subunit family. In terms of assembly, heterodimer of a small subunit (PriS) and a large subunit (PriL). Requires [4Fe-4S] cluster as cofactor.

Its function is as follows. Regulatory subunit of DNA primase, an RNA polymerase that catalyzes the synthesis of short RNA molecules used as primers for DNA polymerase during DNA replication. Stabilizes and modulates the activity of the small subunit, increasing the rate of DNA synthesis, and conferring RNA synthesis capability. The DNA polymerase activity may enable DNA primase to also catalyze primer extension after primer synthesis. May also play a role in DNA repair. This Halobacterium salinarum (strain ATCC 29341 / DSM 671 / R1) protein is DNA primase large subunit PriL.